The primary structure comprises 366 residues: Chorismate synthase (366 aa).

NADP(+)-binding residues include Arg48 and Arg54. Residues 132-134 (RSS), 244-245 (NA), Gly289, 304-308 (KPTSS), and Arg330 contribute to the FMN site.

This sequence belongs to the chorismate synthase family. Homotetramer. FMNH2 serves as cofactor.

It carries out the reaction 5-O-(1-carboxyvinyl)-3-phosphoshikimate = chorismate + phosphate. Its pathway is metabolic intermediate biosynthesis; chorismate biosynthesis; chorismate from D-erythrose 4-phosphate and phosphoenolpyruvate: step 7/7. Functionally, catalyzes the anti-1,4-elimination of the C-3 phosphate and the C-6 proR hydrogen from 5-enolpyruvylshikimate-3-phosphate (EPSP) to yield chorismate, which is the branch point compound that serves as the starting substrate for the three terminal pathways of aromatic amino acid biosynthesis. This reaction introduces a second double bond into the aromatic ring system. The sequence is that of Chorismate synthase from Methylorubrum populi (strain ATCC BAA-705 / NCIMB 13946 / BJ001) (Methylobacterium populi).